Consider the following 895-residue polypeptide: MLGIGTLAKKVFGTPNDRKIKATRPLIAKINALEPEFEALSDQGIKDKTEDLRKRALAGESLDDLLPEAFANVREAARRALGLRAFDTQLMGGTFLHQGNISEMKTGEGKTLVATFPAYLNALTGKGVHVVTVNEYLAKRDSEWMSKVFGALGMTTGVIYSNQPEAEKMAAYQCDVTYATNNELGFDYLRDNMKPSLDQVFQKQHNFAIVDEVDSILIDEARTPLIISGPAEDRSELYETIDKLIPTLDEGHYEIDEKTRGVTFTDEGNEFLEESLLKAGLLEEGASLYDPESTTIVHHVNQALRAHKLFQRDKDYIVRDGNVVLIDEFTGRMMPGRRLSEGLHQAIEAKEGTDIQPENTTLASVTFQNYFRLYDKLSGMTGTAMTEAEEFAEIYGLGVVEVPTNRPIARIDEDDKVYRTANEKYAAMIAETKLAHEKGQPVLLGTTSIEKSELLSQLLQQEGIEHNVLNARHHEQEAKIVAEAGRLGAVTIATNMAGRGTDIQLGGNIDLKVMEALEANPDADPAVLRAEEEAKHAEEKQKVLEAGGLYVMASERHESRRIDNQLRGRSGRQGDPGRTSFYLSLEDDLMRIFGSERLDKLLSGLGMKEGEAIIHPWVNKSLERAQAKVEGRNFDMRKNVLKFDDVMNDQRKVVFAQRREIMASDDTHEIVTDMRHEVIDDLIDIYMPPKTYADQWDTQGLQDDVREKLNIDAPVVEWAAEEGVDDEQIRERLVEASDKLMAEKVEAFGQEGMSNIEKQVLLQTIDAKWREHLLTLEHLRSVVGFRGYAQRDPLNEYKNESFQLFESMLDSLRETVTQQLSRVRPLSEEEQREMMMQMAARQGMQRAAAPAAEPVEAPKEGFVEDDPSTWGNPSRNDKCPCGSGKKFKHCHGRLG.

Residues glutamine 89, 107–111, and aspartate 502 contribute to the ATP site; that span reads GEGKT. Disordered regions lie at residues 560-579 and 848-884; these read RRID…PGRT and AAPA…CGSG. The Zn(2+) site is built by cysteine 879, cysteine 881, cysteine 890, and histidine 891.

The protein belongs to the SecA family. As to quaternary structure, monomer and homodimer. Part of the essential Sec protein translocation apparatus which comprises SecA, SecYEG and auxiliary proteins SecDF-YajC and YidC. Zn(2+) is required as a cofactor.

Its subcellular location is the cell inner membrane. It localises to the cytoplasm. It carries out the reaction ATP + H2O + cellular proteinSide 1 = ADP + phosphate + cellular proteinSide 2.. Functionally, part of the Sec protein translocase complex. Interacts with the SecYEG preprotein conducting channel. Has a central role in coupling the hydrolysis of ATP to the transfer of proteins into and across the cell membrane, serving both as a receptor for the preprotein-SecB complex and as an ATP-driven molecular motor driving the stepwise translocation of polypeptide chains across the membrane. The chain is Protein translocase subunit SecA from Ruegeria sp. (strain TM1040) (Silicibacter sp.).